The sequence spans 88 residues: Large ribosomal subunit protein bL27 (88 aa).

Over residues methionine 1–glycine 13 the composition is skewed to polar residues. The segment at methionine 1–arginine 25 is disordered.

This sequence belongs to the bacterial ribosomal protein bL27 family.

In Corynebacterium efficiens (strain DSM 44549 / YS-314 / AJ 12310 / JCM 11189 / NBRC 100395), this protein is Large ribosomal subunit protein bL27.